A 145-amino-acid chain; its full sequence is Hemoglobin subunit beta (145 aa).

In terms of domain architecture, Globin spans 1-145 (MLTAEEKAAV…VANALAHRYH (145 aa)). T11 carries the phosphothreonine modification. K58 is modified (N6-acetyllysine). Position 62 (H62) interacts with heme b. Residue K81 is modified to N6-acetyllysine. Position 91 (H91) interacts with heme b. S-nitrosocysteine is present on C92.

It belongs to the globin family. In terms of assembly, heterotetramer of two alpha chains and two beta chains. Red blood cells.

In terms of biological role, involved in oxygen transport from the lung to the various peripheral tissues. The chain is Hemoglobin subunit beta (HBB) from Alces alces alces (European moose).